The chain runs to 66 residues: Large ribosomal subunit protein bL33B (66 aa).

This sequence belongs to the bacterial ribosomal protein bL33 family.

The polypeptide is Large ribosomal subunit protein bL33B (Synechococcus sp. (strain CC9605)).